The sequence spans 1243 residues: Plasma membrane calcium-transporting ATPase 2 (1243 aa).

A compositionally biased stretch (polar residues) spans 1–13 (MGDMTNSDFYSKN). Residues 1–24 (MGDMTNSDFYSKNQRNESSHGGEF) form a disordered region. Residues 1-94 (MGDMTNSDFY…NFIPPKKPKT (94 aa)) are Cytoplasmic-facing. A phosphoserine mark is found at Ser-18 and Ser-27. A helical membrane pass occupies residues 95 to 115 (FLQLVWEALQDVTLIILEIAA). Residues 116 to 152 (IISLGLSFYHPPGESNEGCATAQGGAEDEGEAEAGWI) are Extracellular-facing. Residues 153–173 (EGAAILLSVICVVLVTAFNDW) form a helical membrane-spanning segment. Residues 174–390 (SKEKQFRGLQ…KEKSVLQGKL (217 aa)) lie on the Cytoplasmic side of the membrane. Residues 296-308 (EEKKDKKGVKKGD) show a composition bias toward basic and acidic residues. The tract at residues 296–382 (EEKKDKKGVK…KKKANMHKKE (87 aa)) is disordered. Composition is skewed to low complexity over residues 313 to 330 (PAAD…ANAS) and 337 to 356 (QDGS…GAAA). A helical transmembrane segment spans residues 391–410 (TKLAVQIGKAGLVMSAITVI). Topologically, residues 411–443 (ILVLYFTVDTFVVNKKPWLTECTPVYVQYFVKF) are extracellular. The helical transmembrane segment at 444-461 (FIIGVTVLVVAVPEGLPL) threads the bilayer. Topologically, residues 462–875 (AVTISLAYSV…MWGRNVYDSI (414 aa)) are cytoplasmic. Catalysis depends on Asp-499, which acts as the 4-aspartylphosphate intermediate. Mg(2+)-binding residues include Asp-820 and Asp-824. Residues 876–895 (SKFLQFQLTVNVVAVIVAFT) form a helical membrane-spanning segment. The Extracellular segment spans residues 896–905 (GACITQDSPL). Residues 906–926 (KAVQMLWVNLIMDTFASLALA) traverse the membrane as a helical segment. Over 927-946 (TEPPTETLLLRKPYGRNKPL) the chain is Cytoplasmic. Residues 947–969 (ISRTMMKNILGHAVYQLTLIFTL) form a helical membrane-spanning segment. Residues 970–987 (LFVGEKMFQIDSGRNAPL) lie on the Extracellular side of the membrane. A helical transmembrane segment spans residues 988–1009 (HSPPSEHYTIIFNTFVMMQLFN). Topologically, residues 1010-1028 (EINARKIHGERNVFDGIFR) are cytoplasmic. A helical transmembrane segment spans residues 1029 to 1050 (NPIFCTIVLGTFAIQIVIVQFG). Residues 1051–1060 (GKPFSCSPLQ) lie on the Extracellular side of the membrane. Residues 1061–1082 (LDQWMWCIFIGLGELVWGQVIA) traverse the membrane as a helical segment. The Cytoplasmic portion of the chain corresponds to 1083 to 1243 (TIPTSRLKFL…SPIHSLETSL (161 aa)). A phosphoserine mark is found at Glu-1107, Ile-1116, Asp-1117, Arg-1121, Trp-1130, Phe-1131, and Gln-1138. Residues 1123-1140 (LRRGQILWFRGLNRIQTQ) form a calmodulin-binding subdomain A region. A Phosphothreonine; by PKC modification is found at Thr-1139. Residues 1141–1150 (IRVVKAFRSS) are calmodulin-binding subdomain B. Phosphoserine is present on residues Val-1144, Phe-1147, Arg-1148, Tyr-1152, Arg-1161, Thr-1162, Ile-1175, and Ser-1178. The residue at position 1188 (Thr-1188) is a Phosphothreonine. A disordered region spans residues 1194–1243 (AALKQNSSPPSSLNKNNSAIDSGINLTTDTSKSATSSSPGSPIHSLETSL). 2 stretches are compositionally biased toward low complexity: residues 1196–1211 (LKQN…KNNS) and 1220–1234 (TTDT…SPGS). Ser-1201 carries the post-translational modification Phosphoserine; by PKA. A Phosphoserine modification is found at Ser-1211.

It belongs to the cation transport ATPase (P-type) (TC 3.A.3) family. Type IIB subfamily. Interacts with PDZD11. In terms of tissue distribution, isoforms containing segment B are found in brain, uterus, liver and kidney and in low levels in other tissues. Isoforms containing segment W are found in kidney, uterus, and pancreas. Isoforms containing segment Y are found in pancreas and in low levels in brain and heart. Isoforms containing segment Z are found in brain and heart and isoforms containing segment X are found in low levels in brain. Isoforms containing segment A are found in low levels in heart and small intestine while isoforms containing segment C are found in testis and in low levels in other tissues.

Its subcellular location is the cell membrane. It localises to the synapse. The protein localises to the apical cell membrane. It is found in the basolateral cell membrane. It carries out the reaction Ca(2+)(in) + ATP + H2O = Ca(2+)(out) + ADP + phosphate + H(+). ATP-driven Ca(2+) ion pump involved in the maintenance of basal intracellular Ca(2+) levels in specialized cells of cerebellar circuit and vestibular and cochlear systems. Uses ATP as an energy source to transport cytosolic Ca(2+) ions across the plasma membrane to the extracellular compartment. Has fast activation and Ca(2+) clearance rate suited to control fast neuronal Ca(2+) dynamics. At parallel fiber to Purkinje neuron synapse, mediates presynaptic Ca(2+) efflux in response to climbing fiber-induced Ca(2+) rise. Provides for fast return of Ca(2+) concentrations back to their resting levels, ultimately contributing to long-term depression induction and motor learning. Plays an essential role in hearing and balance. In cochlear hair cells, shuttles Ca(2+) ions from stereocilia to the endolymph and dissipates Ca(2+) transients generated by the opening of the mechanoelectrical transduction channels. Regulates Ca(2+) levels in the vestibular system, where it contributes to the formation of otoconia. In non-excitable cells, regulates Ca(2+) signaling through spatial control of Ca(2+) ions extrusion and dissipation of Ca(2+) transients generated by store-operated channels. In lactating mammary gland, allows for the high content of Ca(2+) ions in the milk. The sequence is that of Plasma membrane calcium-transporting ATPase 2 (Atp2b2) from Rattus norvegicus (Rat).